The sequence spans 506 residues: Glycerol kinase (506 aa).

Thr14 contributes to the ADP binding site. ATP is bound by residues Thr14, Thr15, and Ser16. Thr14 serves as a coordination point for sn-glycerol 3-phosphate. Arg18 contacts ADP. The sn-glycerol 3-phosphate site is built by Arg84, Glu85, and Tyr136. Residues Arg84, Glu85, and Tyr136 each coordinate glycerol. The residue at position 232 (His232) is a Phosphohistidine; by HPr. Asp246 provides a ligand contact to sn-glycerol 3-phosphate. The glycerol site is built by Asp246 and Gln247. Thr268 and Gly311 together coordinate ADP. Residues Thr268, Gly311, Gln315, and Gly412 each contribute to the ATP site. Residues Gly412 and Asn416 each coordinate ADP.

The protein belongs to the FGGY kinase family. In terms of assembly, homotetramer and homodimer (in equilibrium). The phosphoenolpyruvate-dependent sugar phosphotransferase system (PTS), including enzyme I, and histidine-containing protein (HPr) are required for the phosphorylation of His-232, which leads to the activation of the enzyme.

The catalysed reaction is glycerol + ATP = sn-glycerol 3-phosphate + ADP + H(+). Its pathway is polyol metabolism; glycerol degradation via glycerol kinase pathway; sn-glycerol 3-phosphate from glycerol: step 1/1. With respect to regulation, activated by phosphorylation and inhibited by fructose 1,6-bisphosphate (FBP). Its function is as follows. Key enzyme in the regulation of glycerol uptake and metabolism. Catalyzes the phosphorylation of glycerol to yield sn-glycerol 3-phosphate. The polypeptide is Glycerol kinase (Enterococcus casseliflavus (Enterococcus flavescens)).